Reading from the N-terminus, the 385-residue chain is Flap endonuclease 1 (385 aa).

The interval 1–104 is N-domain; it reads MGILGLSKLI…GELAKRAERR (104 aa). Asp-34 contributes to the Mg(2+) binding site. The DNA site is built by Arg-47 and Arg-70. 5 residues coordinate Mg(2+): Asp-86, Glu-158, Glu-160, Asp-179, and Asp-181. The interval 122–253 is I-domain; that stretch reads GIEKFNRRLV…KRAIELINTY (132 aa). Glu-158 contributes to the DNA binding site. The DNA site is built by Gly-231 and Asp-233. Asp-233 is a Mg(2+) binding site. The segment at 336–344 is interaction with PCNA; sequence TQVRLDSFF. Positions 346–385 are disordered; that stretch reads TLPSTPNATNAAKRKADEAKKSANNKKAKTSGGGRGRRPK. Basic residues predominate over residues 368-385; it reads ANNKKAKTSGGGRGRRPK.

Belongs to the XPG/RAD2 endonuclease family. FEN1 subfamily. In terms of assembly, interacts with PCNA. Three molecules of FEN1 bind to one PCNA trimer with each molecule binding to one PCNA monomer. PCNA stimulates the nuclease activity without altering cleavage specificity. Mg(2+) serves as cofactor. In terms of processing, phosphorylated. Phosphorylation upon DNA damage induces relocalization to the nuclear plasma.

It localises to the nucleus. Its subcellular location is the nucleolus. The protein resides in the nucleoplasm. The protein localises to the mitochondrion. Functionally, structure-specific nuclease with 5'-flap endonuclease and 5'-3' exonuclease activities involved in DNA replication and repair. During DNA replication, cleaves the 5'-overhanging flap structure that is generated by displacement synthesis when DNA polymerase encounters the 5'-end of a downstream Okazaki fragment. It enters the flap from the 5'-end and then tracks to cleave the flap base, leaving a nick for ligation. Also involved in the long patch base excision repair (LP-BER) pathway, by cleaving within the apurinic/apyrimidinic (AP) site-terminated flap. Acts as a genome stabilization factor that prevents flaps from equilibrating into structures that lead to duplications and deletions. Also possesses 5'-3' exonuclease activity on nicked or gapped double-stranded DNA, and exhibits RNase H activity. Also involved in replication and repair of rDNA and in repairing mitochondrial DNA. The chain is Flap endonuclease 1 from Drosophila sechellia (Fruit fly).